A 252-amino-acid chain; its full sequence is 3-dehydroquinate dehydratase (252 aa).

3-dehydroquinate is bound by residues Ser21, 46-48, and Arg82; that span reads EWR. The active-site Proton donor/acceptor is His143. Lys170 serves as the catalytic Schiff-base intermediate with substrate. Arg213, Ser232, and Gln236 together coordinate 3-dehydroquinate.

This sequence belongs to the type-I 3-dehydroquinase family. In terms of assembly, homodimer.

It carries out the reaction 3-dehydroquinate = 3-dehydroshikimate + H2O. It functions in the pathway metabolic intermediate biosynthesis; chorismate biosynthesis; chorismate from D-erythrose 4-phosphate and phosphoenolpyruvate: step 3/7. In terms of biological role, involved in the third step of the chorismate pathway, which leads to the biosynthesis of aromatic amino acids. Catalyzes the cis-dehydration of 3-dehydroquinate (DHQ) and introduces the first double bond of the aromatic ring to yield 3-dehydroshikimate. This Salmonella choleraesuis (strain SC-B67) protein is 3-dehydroquinate dehydratase.